The primary structure comprises 187 residues: MFDLPKIEKAVKMILEAIGEDPNREGLEETPARVARMYQEIFAGLGEDPEEHLGKTFSEEHEEMVIVKDIRLFSMCEHHLIPFIGKAHVCYIPRNGNVTGLSKLARLVNGYARRPQLQERLTKQIADAIMKRLNPYGVVVVVEAEHLCMSMRGVRSPGARTVTSAVRGIFKKNEASRAEAMSLIMKS.

Cys-76, His-79, and Cys-148 together coordinate Zn(2+).

This sequence belongs to the GTP cyclohydrolase I family. In terms of assembly, homomer.

The enzyme catalyses GTP + H2O = 7,8-dihydroneopterin 3'-triphosphate + formate + H(+). Its pathway is cofactor biosynthesis; 7,8-dihydroneopterin triphosphate biosynthesis; 7,8-dihydroneopterin triphosphate from GTP: step 1/1. This is GTP cyclohydrolase 1 from Desulforamulus reducens (strain ATCC BAA-1160 / DSM 100696 / MI-1) (Desulfotomaculum reducens).